We begin with the raw amino-acid sequence, 348 residues long: Probable dual-specificity RNA methyltransferase RlmN (348 aa).

E93 functions as the Proton acceptor in the catalytic mechanism. The 235-residue stretch at 99–333 (TEKRLTACLS…VSLRKSRGLD (235 aa)) folds into the Radical SAM core domain. C106 and C338 are oxidised to a cystine. Positions 113, 117, and 120 each coordinate [4Fe-4S] cluster. S-adenosyl-L-methionine is bound by residues 160-161 (GE), S190, 219-221 (SLH), and N295. Residue C338 is the S-methylcysteine intermediate of the active site.

This sequence belongs to the radical SAM superfamily. RlmN family. Requires [4Fe-4S] cluster as cofactor.

It is found in the cytoplasm. The catalysed reaction is adenosine(2503) in 23S rRNA + 2 reduced [2Fe-2S]-[ferredoxin] + 2 S-adenosyl-L-methionine = 2-methyladenosine(2503) in 23S rRNA + 5'-deoxyadenosine + L-methionine + 2 oxidized [2Fe-2S]-[ferredoxin] + S-adenosyl-L-homocysteine. It catalyses the reaction adenosine(37) in tRNA + 2 reduced [2Fe-2S]-[ferredoxin] + 2 S-adenosyl-L-methionine = 2-methyladenosine(37) in tRNA + 5'-deoxyadenosine + L-methionine + 2 oxidized [2Fe-2S]-[ferredoxin] + S-adenosyl-L-homocysteine. Functionally, specifically methylates position 2 of adenine 2503 in 23S rRNA and position 2 of adenine 37 in tRNAs. The chain is Probable dual-specificity RNA methyltransferase RlmN from Prochlorococcus marinus (strain MIT 9215).